We begin with the raw amino-acid sequence, 341 residues long: UDP-3-O-acylglucosamine N-acyltransferase (341 aa).

His-241 (proton acceptor) is an active-site residue.

This sequence belongs to the transferase hexapeptide repeat family. LpxD subfamily. As to quaternary structure, homotrimer.

The catalysed reaction is a UDP-3-O-[(3R)-3-hydroxyacyl]-alpha-D-glucosamine + a (3R)-hydroxyacyl-[ACP] = a UDP-2-N,3-O-bis[(3R)-3-hydroxyacyl]-alpha-D-glucosamine + holo-[ACP] + H(+). Its pathway is bacterial outer membrane biogenesis; LPS lipid A biosynthesis. Functionally, catalyzes the N-acylation of UDP-3-O-acylglucosamine using 3-hydroxyacyl-ACP as the acyl donor. Is involved in the biosynthesis of lipid A, a phosphorylated glycolipid that anchors the lipopolysaccharide to the outer membrane of the cell. The protein is UDP-3-O-acylglucosamine N-acyltransferase of Histophilus somni (strain 129Pt) (Haemophilus somnus).